The primary structure comprises 409 residues: Multifunctional CCA protein (409 aa).

ATP-binding residues include Gly8 and Arg11. CTP is bound by residues Gly8 and Arg11. Positions 21 and 23 each coordinate Mg(2+). The ATP site is built by Arg91, Arg137, and Arg140. CTP is bound by residues Arg91, Arg137, and Arg140. The region spanning 228 to 329 is the HD domain; sequence TGVHVLSVLE…LELLQSFDVY (102 aa).

The protein belongs to the tRNA nucleotidyltransferase/poly(A) polymerase family. Bacterial CCA-adding enzyme type 1 subfamily. In terms of assembly, monomer. Can also form homodimers and oligomers. Requires Mg(2+) as cofactor. It depends on Ni(2+) as a cofactor.

It catalyses the reaction a tRNA precursor + 2 CTP + ATP = a tRNA with a 3' CCA end + 3 diphosphate. The catalysed reaction is a tRNA with a 3' CCA end + 2 CTP + ATP = a tRNA with a 3' CCACCA end + 3 diphosphate. In terms of biological role, catalyzes the addition and repair of the essential 3'-terminal CCA sequence in tRNAs without using a nucleic acid template. Adds these three nucleotides in the order of C, C, and A to the tRNA nucleotide-73, using CTP and ATP as substrates and producing inorganic pyrophosphate. tRNA 3'-terminal CCA addition is required both for tRNA processing and repair. Also involved in tRNA surveillance by mediating tandem CCA addition to generate a CCACCA at the 3' terminus of unstable tRNAs. While stable tRNAs receive only 3'-terminal CCA, unstable tRNAs are marked with CCACCA and rapidly degraded. In Pseudomonas savastanoi pv. phaseolicola (strain 1448A / Race 6) (Pseudomonas syringae pv. phaseolicola (strain 1448A / Race 6)), this protein is Multifunctional CCA protein.